Reading from the N-terminus, the 370-residue chain is Immunoglobulin superfamily member 5 (370 aa).

The N-terminal stretch at 1-24 (MEGSWRDVLAVLVILAQLTASGSS) is a signal peptide. Ig-like V-type domains are found at residues 25 to 125 (YQII…LSVQ) and 128 to 215 (GTLN…KSLT). Over 25–239 (YQIIEGPQNV…EEGPALPTWA (215 aa)) the chain is Extracellular. N-linked (GlcNAc...) asparagine glycans are attached at residues N33 and N45. Cysteines 46 and 109 form a disulfide. N-linked (GlcNAc...) asparagine glycosylation is found at N146, N196, and N217. C149 and C201 are joined by a disulfide. The chain crosses the membrane as a helical span at residues 240–260 (IILLAVAFSLLLILIIVLIII). Residues 261–370 (FCCCCASRRE…PQKVRNVTLV (110 aa)) are Cytoplasmic-facing. Residues 284–359 (ANMRTNKADP…THPRVSFDIA (76 aa)) form a disordered region. Residues 289–301 (NKADPETKLKGGK) show a composition bias toward basic and acidic residues.

This sequence belongs to the immunoglobulin superfamily. In terms of assembly, interacts with MAGI1 at tight junctions, forms a tripartite complex with NPHS1. Interacts with LNX1 isoform 2 via its PDZ 2 domain, it may also interact with other isoforms containing this domain. Post-translationally, N-glycosylated. As to expression, localized to kidney glomeruli and small intestinal epithelial cells. In kidney glomeruli, it is localized at slit diaphragm. Also found in spermatogonia, gonocytes, hematopoietic stem cells and Sertoli cells.

The protein resides in the apical cell membrane. It is found in the cell junction. The protein localises to the tight junction. Functionally, provides, together with MAGI1, an adhesion machinery at tight junctions, which may regulate the permeability of kidney glomerulus and small intestinal epithelial cells. Mediates calcium-independent homophilic cell adhesion. In testis, it may function as a cell adhesion molecule rather than a tight-junction protein. It may participate in the adhesion between spermatogonia-spermatogonia, spermatogonia-Sertoli cells, and Sertoli cells-Sertoli cells. In Mus musculus (Mouse), this protein is Immunoglobulin superfamily member 5 (Igsf5).